The chain runs to 549 residues: Leiomodin-2 (549 aa).

Positions 1–42 (MSTFGYRRGLSKYESIDEDELLASLTAEELKELERELEDIEP) are tropomyosin-binding. The interaction with tropomyosin alpha stretch occupies residues 1–47 (MSTFGYRRGLSKYESIDEDELLASLTAEELKELERELEDIEPDRNLP). Interaction with actin stretches follow at residues 1–164 (MSTF…PDNS), 165–499 (KPKT…KEIK), and 523–542 (AHENLMEAIRGSSIRQLRRV). A phosphoserine mark is found at serine 11, serine 15, and serine 24. Disordered regions lie at residues 91–166 (KLAE…NSKP), 179–200 (TNGNSGGTQRNTESPAAIHPCG), 358–455 (MDKQ…PGKK), and 469–534 (ESAQ…IRGS). Acidic residues-rich tracts occupy residues 95–105 (EDKEESEEELI) and 113–143 (VSEEVCTEEEEESTEEEEEEEEEDSEEEEVT). Polar residues-rich tracts occupy residues 150–163 (INGTVSHNGVNPDN) and 179–192 (TNGNSGGTQRNTES). Basic and acidic residues predominate over residues 358–376 (MDKQRQKRMQEQKQQEGHD). Polar residues predominate over residues 390 to 401 (TPGSSPYASPRQ). The residue at position 406 (serine 406) is a Phosphoserine. Over residues 420–452 (PPSPVAPPPPPPPPPLPPHMLPPPPPPPAPPLP) the composition is skewed to pro residues. A coiled-coil region spans residues 457–515 (ITRNIAEVIKQQESAQRALQNGQRKKKGKKVKKQPNNILKEIKNSLRSVQEKKMEESSR). Residues 469–478 (ESAQRALQNG) are compositionally biased toward polar residues. Over residues 479-489 (QRKKKGKKVKK) the composition is skewed to basic residues. The segment covering 496-514 (KEIKNSLRSVQEKKMEESS) has biased composition (basic and acidic residues). In terms of domain architecture, WH2 spans 523–542 (AHENLMEAIRGSSIRQLRRV).

Belongs to the tropomodulin family. As to quaternary structure, can bind at least three actin monomers and thereby provides a nucleus for actin filament formation. Interacts (via N-terminus) with tropomyosin alpha (TPM1) (via N-terminus). May also interact with TPM2 (via N-terminus). Interacts with FLII.

It localises to the cytoplasm. The protein localises to the myofibril. Its subcellular location is the sarcomere. It is found in the m line. The protein resides in the cytoskeleton. Functionally, mediates nucleation of actin filaments and thereby promotes actin polymerization. Plays a role in the regulation of actin filament length. Required for normal sarcomere organization in the heart, and for normal heart function. In Rattus norvegicus (Rat), this protein is Leiomodin-2 (Lmod2).